The following is a 501-amino-acid chain: Mitogen-activated protein kinase 16 (501 aa).

The region spanning Tyr22 to Phe313 is the Protein kinase domain. Residues Val28–Val36 and Lys51 contribute to the ATP site. The Proton acceptor role is filled by Asp148. Residue Thr184 is modified to Phosphothreonine. The TXY motif lies at Thr184–Tyr186. Phosphotyrosine is present on Tyr186. The tract at residues Asp477–Thr501 is disordered.

It belongs to the protein kinase superfamily. CMGC Ser/Thr protein kinase family. MAP kinase subfamily. Dually phosphorylated on Thr-184 and Tyr-186, which activates the enzyme.

It catalyses the reaction L-seryl-[protein] + ATP = O-phospho-L-seryl-[protein] + ADP + H(+). The catalysed reaction is L-threonyl-[protein] + ATP = O-phospho-L-threonyl-[protein] + ADP + H(+). Its activity is regulated as follows. Activated by threonine and tyrosine phosphorylation. The protein is Mitogen-activated protein kinase 16 (MPK16) of Oryza sativa subsp. japonica (Rice).